The primary structure comprises 789 residues: Larval serum protein 1 beta chain (789 aa).

A signal peptide spans 1-16 (MKIAIALLACLGLAAA).

This sequence belongs to the hemocyanin family. As to quaternary structure, heterohexamer, composed of three subunits, alpha, beta and gamma. As to expression, larval hemolymph.

It localises to the secreted. It is found in the extracellular space. Functionally, larval storage protein (LSP) which may serve as a store of amino acids for synthesis of adult proteins. In Drosophila melanogaster (Fruit fly), this protein is Larval serum protein 1 beta chain (Lsp1beta).